Reading from the N-terminus, the 1019-residue chain is Phosphatidylinositol 3,4,5-trisphosphate 5-phosphatase 1 (1019 aa).

The region spanning 5–101 is the SH2 domain; the sequence is WYHGNITRSK…GLVTHLQYPI (97 aa). Over residues 103-116 the composition is skewed to acidic residues; it reads KEEEGPEEPDEEQE. 2 disordered regions span residues 103 to 133 and 909 to 1019; these read KEEEGPEEPDEEQEPAPPNVPPRNFAFTPPS and ETQN…PPTA. An SH3-binding 1 motif is present at residues 120 to 125; the sequence is PNVPPR. Polar residues-rich tracts occupy residues 909–931 and 958–980; these read ETQNSMDHTASVAAISSQAKQSP and PITSPPRTTLSTQKFSHSNTNRT. The SH3-binding 2 motif lies at 966-971; the sequence is TLSTQK. The short motif at 1004–1007 is the NPXY motif element; that stretch reads NPLY. Phosphotyrosine is present on Y1007. A compositionally biased stretch (polar residues) spans 1010 to 1019; it reads VNNTLYPPTA.

It belongs to the inositol 1,4,5-trisphosphate 5-phosphatase family. Post-translationally, tyrosine phosphorylated by the members of the SRC family after exposure to a diverse array of extracellular stimuli.

The protein resides in the cytoplasm. Its subcellular location is the cell membrane. The protein localises to the membrane raft. It is found in the cytoskeleton. The catalysed reaction is a 1,2-diacyl-sn-glycero-3-phospho-(1D-myo-inositol-3,4,5-trisphosphate) + H2O = a 1,2-diacyl-sn-glycero-3-phospho-(1D-myo-inositol-3,4-bisphosphate) + phosphate. It carries out the reaction 1D-myo-inositol 1,3,4,5-tetrakisphosphate + H2O = 1D-myo-inositol 1,3,4-trisphosphate + phosphate. The enzyme catalyses a 1,2-diacyl-sn-glycero-3-phospho-(1D-myo-inositol-4,5-bisphosphate) + H2O = a 1,2-diacyl-sn-glycero-3-phospho-(1D-myo-inositol 4-phosphate) + phosphate. Functionally, phosphatidylinositol (PtdIns) phosphatase that specifically hydrolyzes the 5-phosphate of phosphatidylinositol-3,4,5-trisphosphate (PtdIns(3,4,5)P3) to produce PtdIns(3,4)P2, thereby negatively regulating the PI3K (phosphoinositide 3-kinase) pathways. Able also to hydrolyzes the 5-phosphate of phosphatidylinositol-4,5-bisphosphate (PtdIns(4,5)P3) and inositol 1,3,4,5-tetrakisphosphate. Acts as a negative regulator of B-cell antigen receptor signaling. Mediates signaling from the FC-gamma-RIIB receptor (FCGR2B), playing a central role in terminating signal transduction from activating immune/hematopoietic cell receptor systems. Acts as a negative regulator of myeloid cell proliferation/survival and chemotaxis, mast cell degranulation, immune cells homeostasis, integrin alpha-IIb/beta-3 signaling in platelets and JNK signaling in B-cells. In Xenopus laevis (African clawed frog), this protein is Phosphatidylinositol 3,4,5-trisphosphate 5-phosphatase 1 (inpp5d).